The chain runs to 129 residues: Protein LLP homolog (129 aa).

The span at 1–21 (MAKSLRSKWKRKMRAEKRKKN) shows a compositional bias: basic residues. Positions 1–27 (MAKSLRSKWKRKMRAEKRKKNAPKEAS) are disordered. Residues Lys-67 and Lys-74 each participate in a glycyl lysine isopeptide (Lys-Gly) (interchain with G-Cter in SUMO2) cross-link. A compositionally biased stretch (basic residues) spans 100–122 (RQRKRLKAKREKRKGKSKAKAVK). The disordered stretch occupies residues 100 to 129 (RQRKRLKAKREKRKGKSKAKAVKVAKGLAW).

The protein belongs to the learning-associated protein family. In terms of assembly, interacts with CTCF, MYO1C and with the transcriptional machinery, including RNA polymerase II and TBP.

It is found in the nucleus. Its subcellular location is the nucleolus. The protein resides in the chromosome. Functionally, in hippocampal neurons, regulates dendritic and spine growth and synaptic transmission. This is Protein LLP homolog (LLPH) from Homo sapiens (Human).